Consider the following 147-residue polypeptide: UPF0735 ACT domain-containing protein YszB (147 aa).

Residues 70–145 (TLFFHLEDRS…FVEKVEILGS (76 aa)) form the ACT domain.

Belongs to the UPF0735 family.

The chain is UPF0735 ACT domain-containing protein YszB (yszB) from Bacillus subtilis (strain 168).